The sequence spans 557 residues: CTP synthase (557 aa).

The amidoligase domain stretch occupies residues 1-267; that stretch reads MAKFVFVTGG…CREVLDVLDL (267 aa). Ser-13 provides a ligand contact to CTP. Ser-13 contacts UTP. ATP-binding positions include 14 to 19 and Asp-71; that span reads SIGKGI. Positions 71 and 141 each coordinate Mg(2+). Residues 148–150, 188–193, and Lys-224 each bind CTP; these read DIE and KTKPTQ. UTP-binding positions include 188 to 193 and Lys-224; that span reads KTKPTQ. In terms of domain architecture, Glutamine amidotransferase type-1 spans 292–534; that stretch reads KVALVGKYVQ…IEAAQQRLPC (243 aa). Gly-354 contacts L-glutamine. Residue Cys-381 is the Nucleophile; for glutamine hydrolysis of the active site. L-glutamine contacts are provided by residues 382-385, Glu-405, and Arg-462; that span reads LGMQ. Active-site residues include His-507 and Glu-509. A disordered region spans residues 532–557; that stretch reads LPCSPSEAMRQQNNSAAGSSHPSLQP. Residues 540–557 are compositionally biased toward polar residues; the sequence is MRQQNNSAAGSSHPSLQP.

Belongs to the CTP synthase family. As to quaternary structure, homotetramer.

It catalyses the reaction UTP + L-glutamine + ATP + H2O = CTP + L-glutamate + ADP + phosphate + 2 H(+). It carries out the reaction L-glutamine + H2O = L-glutamate + NH4(+). The catalysed reaction is UTP + NH4(+) + ATP = CTP + ADP + phosphate + 2 H(+). It functions in the pathway pyrimidine metabolism; CTP biosynthesis via de novo pathway; CTP from UDP: step 2/2. With respect to regulation, allosterically activated by GTP, when glutamine is the substrate; GTP has no effect on the reaction when ammonia is the substrate. The allosteric effector GTP functions by stabilizing the protein conformation that binds the tetrahedral intermediate(s) formed during glutamine hydrolysis. Inhibited by the product CTP, via allosteric rather than competitive inhibition. Its function is as follows. Catalyzes the ATP-dependent amination of UTP to CTP with either L-glutamine or ammonia as the source of nitrogen. Regulates intracellular CTP levels through interactions with the four ribonucleotide triphosphates. The polypeptide is CTP synthase (Synechococcus sp. (strain CC9311)).